Reading from the N-terminus, the 135-residue chain is Actin-related protein 2/3 complex subunit 5B (135 aa).

This sequence belongs to the ARPC5 family. As to quaternary structure, component of the Arp2/3 complex composed of ARP2, ARP3, ARPC1/p41-ARC, ARPC2/p34-ARC, ARPC3/p21-ARC, ARPC4/p20-ARC and ARPC5/p16-ARC.

Its subcellular location is the cytoplasm. It localises to the cytoskeleton. The protein resides in the cell projection. In terms of biological role, functions as a component of the Arp2/3 complex which is involved in regulation of actin polymerization and together with an activating nucleation-promoting factor (NPF) mediates the formation of branched actin networks. Arp2/3 complex plays a critical role in the control of cell morphogenesis via the modulation of cell polarity development. The chain is Actin-related protein 2/3 complex subunit 5B (ARPC5B) from Arabidopsis thaliana (Mouse-ear cress).